A 111-amino-acid chain; its full sequence is U-scoloptoxin(16)-Sm2a (111 aa).

Positions Met1–Trp28 are cleaved as a signal peptide.

It belongs to the scoloptoxin-16 family. In terms of processing, contains 4 disulfide bonds. Expressed by the venom gland.

Its subcellular location is the secreted. The protein is U-scoloptoxin(16)-Sm2a of Scolopendra morsitans (Tanzanian blue ringleg centipede).